The sequence spans 243 residues: Ribosomal RNA small subunit methyltransferase J (243 aa).

S-adenosyl-L-methionine is bound by residues 112-113 and D164; that span reads ER.

The protein belongs to the methyltransferase superfamily. RsmJ family.

It is found in the cytoplasm. It carries out the reaction guanosine(1516) in 16S rRNA + S-adenosyl-L-methionine = N(2)-methylguanosine(1516) in 16S rRNA + S-adenosyl-L-homocysteine + H(+). In terms of biological role, specifically methylates the guanosine in position 1516 of 16S rRNA. This chain is Ribosomal RNA small subunit methyltransferase J, found in Legionella pneumophila (strain Corby).